A 1488-amino-acid chain; its full sequence is Calmodulin binding protein PICBP (1488 aa).

Disordered regions lie at residues 1–31 (MSNPMFPEKWEESSTSKSSRRVHKRRERKMW), 63–112 (TAES…SRIS), 280–329 (GPLG…GRSS), and 378–414 (HDHDDGKVDGTTSDGTVGDNEEVCREGSSGELREEDG). The segment covering 18–31 (SSRRVHKRRERKMW) has biased composition (basic residues). The span at 76–86 (DDSRTYSKSSD) shows a compositional bias: basic and acidic residues. Basic residues predominate over residues 98–107 (SVKRRAKSKS). Residues 297 to 312 (DNVDGDSDEEVFEEEV) are compositionally biased toward acidic residues. Calmodulin-binding regions lie at residues 493-592 (TFHM…SLIP) and 831-938 (NSLK…DIVL). Disordered regions lie at residues 816–844 (IPDSSSDEESVSESSNSLKEEKEHQGETK) and 941–971 (HDTPKQTKNSDTPRNNDETKEGKPRVEEGCE). 2 stretches are compositionally biased toward basic and acidic residues: residues 833 to 844 (LKEEKEHQGETK) and 954 to 971 (RNNDETKEGKPRVEEGCE). The interval 1135–1229 (EKRVKGWNNV…SLLAQAFDTI (95 aa)) is calmodulin-binding. Disordered stretches follow at residues 1232 to 1252 (QDMGSGSTPGSAASSRNISRQ) and 1316 to 1340 (EKNQTLPEETRKEEEEEELKEDTSV). Low complexity predominate over residues 1235–1252 (GSGSTPGSAASSRNISRQ). Positions 1316–1328 (EKNQTLPEETRKE) are enriched in basic and acidic residues. The interval 1379 to 1483 (RQKSETLQVS…QLLVQAFESL (105 aa)) is calmodulin-binding.

Its function is as follows. Binds calmodulin in a calcium-dependent manner in vitro. May play a role in general plant defense including R gene-mediated responses. This Arabidopsis thaliana (Mouse-ear cress) protein is Calmodulin binding protein PICBP.